Consider the following 690-residue polypeptide: Elongation factor G (690 aa).

Residues 8–283 (EDYRNFGIMA…AVVAYLPSPL (276 aa)) form the tr-type G domain. GTP is bound by residues 17–24 (AHIDAGKT), 81–85 (DTPGH), and 135–138 (NKMD).

The protein belongs to the TRAFAC class translation factor GTPase superfamily. Classic translation factor GTPase family. EF-G/EF-2 subfamily.

It is found in the cytoplasm. Functionally, catalyzes the GTP-dependent ribosomal translocation step during translation elongation. During this step, the ribosome changes from the pre-translocational (PRE) to the post-translocational (POST) state as the newly formed A-site-bound peptidyl-tRNA and P-site-bound deacylated tRNA move to the P and E sites, respectively. Catalyzes the coordinated movement of the two tRNA molecules, the mRNA and conformational changes in the ribosome. The chain is Elongation factor G from Nitrobacter winogradskyi (strain ATCC 25391 / DSM 10237 / CIP 104748 / NCIMB 11846 / Nb-255).